The sequence spans 105 residues: Anti-sigma factor RsrA (105 aa).

Zn(2+) is bound by residues cysteine 11, histidine 37, cysteine 41, and cysteine 44. A disulfide bridge connects residues cysteine 11 and cysteine 44. A contributes to redox-sensitivity region spans residues 33–47 (KFEHHFEECSPCLEK). The interval 86-105 (QSVPEHDVAAAPSSSAPQES) is disordered. Residues 94–105 (AAAPSSSAPQES) show a composition bias toward low complexity.

Belongs to the zinc-associated anti-sigma factor (ZAS) superfamily. As to quaternary structure, interacts with cognate sigma factor SigR under reducing but not oxiding conditions. Treatment with the thiol-oxidzing agent diamide inhibits the interaction, while incubation with thioredoxin (trxA) stimulates the interaction. Zn(2+) is required as a cofactor. In terms of processing, under oxidizing conditions up to 3 disulfide bonds are formed. A single disulfide bond inhibits binding to SigR. Cys-11 forms a disulfide bond with either Cys-44 (the major bind) or Cys-41 (a minor bond).

A redox-regulated anti-sigma factor for extracytoplasmic function (ECF) sigma factor SigR, and a key sensor of disulfide stress. Holds SigR, its cognate ECF sigma factor, in an inactive form, inhibiting its sigma activity under reducing but not oxidizing conditions; oxidation and reduction of the anti-sigma factor is reversible. Mycothiol (MSH) is competent for reduction of RsrA, allowing it to bind to SigR. In conjunction with its cognate sigma factor SigR may sense the intracellular level of reduced MSH. Probably releases SigR during oxidative stress. The chain is Anti-sigma factor RsrA (rsrA) from Streptomyces coelicolor (strain ATCC BAA-471 / A3(2) / M145).